Here is a 123-residue protein sequence, read N- to C-terminus: Large ribosomal subunit protein uL14c (123 aa).

It belongs to the universal ribosomal protein uL14 family. Part of the 50S ribosomal subunit.

The protein localises to the plastid. The protein resides in the chloroplast. In terms of biological role, binds to 23S rRNA. In Sorghum bicolor (Sorghum), this protein is Large ribosomal subunit protein uL14c.